The sequence spans 196 residues: ATP-dependent Clp protease proteolytic subunit (196 aa).

Serine 101 functions as the Nucleophile in the catalytic mechanism. Histidine 126 is an active-site residue.

It belongs to the peptidase S14 family. Component of the chloroplastic Clp protease core complex.

The protein resides in the plastid. The protein localises to the chloroplast stroma. The enzyme catalyses Hydrolysis of proteins to small peptides in the presence of ATP and magnesium. alpha-casein is the usual test substrate. In the absence of ATP, only oligopeptides shorter than five residues are hydrolyzed (such as succinyl-Leu-Tyr-|-NHMec, and Leu-Tyr-Leu-|-Tyr-Trp, in which cleavage of the -Tyr-|-Leu- and -Tyr-|-Trp bonds also occurs).. Its function is as follows. Cleaves peptides in various proteins in a process that requires ATP hydrolysis. Has a chymotrypsin-like activity. Plays a major role in the degradation of misfolded proteins. The chain is ATP-dependent Clp protease proteolytic subunit from Citrus sinensis (Sweet orange).